We begin with the raw amino-acid sequence, 254 residues long: Pimeloyl-[acyl-carrier protein] methyl ester esterase (254 aa).

An AB hydrolase-1 domain is found at 16–242 (LVLIHGWGMN…ASHAPFISHP (227 aa)). Substrate contacts are provided by residues tryptophan 22, 82 to 83 (SL), and 143 to 147 (FLALQ). The active-site Nucleophile is serine 82. Catalysis depends on residues aspartate 207 and histidine 235. Substrate is bound at residue histidine 235.

This sequence belongs to the AB hydrolase superfamily. Carboxylesterase BioH family. Monomer.

Its subcellular location is the cytoplasm. The catalysed reaction is 6-carboxyhexanoyl-[ACP] methyl ester + H2O = 6-carboxyhexanoyl-[ACP] + methanol + H(+). The protein operates within cofactor biosynthesis; biotin biosynthesis. Functionally, the physiological role of BioH is to remove the methyl group introduced by BioC when the pimeloyl moiety is complete. It allows to synthesize pimeloyl-ACP via the fatty acid synthetic pathway through the hydrolysis of the ester bonds of pimeloyl-ACP esters. This is Pimeloyl-[acyl-carrier protein] methyl ester esterase from Photobacterium profundum (strain SS9).